The chain runs to 406 residues: Outer membrane protein assembly factor BamB (406 aa).

Residues 1–23 form the signal peptide; sequence MMKQVDMYKRVALIALMGMSLAG. The N-palmitoyl cysteine moiety is linked to residue cysteine 24. The S-diacylglycerol cysteine moiety is linked to residue cysteine 24.

It belongs to the BamB family. Part of the Bam complex.

It localises to the cell outer membrane. In terms of biological role, part of the outer membrane protein assembly complex, which is involved in assembly and insertion of beta-barrel proteins into the outer membrane. The sequence is that of Outer membrane protein assembly factor BamB from Xanthomonas campestris pv. campestris (strain ATCC 33913 / DSM 3586 / NCPPB 528 / LMG 568 / P 25).